A 362-amino-acid chain; its full sequence is Carbamoyl phosphate synthase pyrimidine-specific small chain (362 aa).

A CPSase region spans residues 1-168 (MKRQLILEDG…TRDPYHVPGP (168 aa)). Ser45, Gly219, and Gly221 together coordinate L-glutamine. The region spanning 171–358 (RVVLVDYGMK…IKLMESNKHR (188 aa)) is the Glutamine amidotransferase type-1 domain. Cys246 (nucleophile) is an active-site residue. L-glutamine is bound by residues Leu247, Gln250, Asn288, Gly290, and Tyr291. Residues His331 and Glu333 contribute to the active site.

This sequence belongs to the CarA family. In terms of assembly, composed of two chains; the small (or glutamine) chain promotes the hydrolysis of glutamine to ammonia, which is used by the large (or ammonia) chain to synthesize carbamoyl phosphate. Tetramer of heterodimers (alpha,beta)4.

The catalysed reaction is hydrogencarbonate + L-glutamine + 2 ATP + H2O = carbamoyl phosphate + L-glutamate + 2 ADP + phosphate + 2 H(+). It catalyses the reaction L-glutamine + H2O = L-glutamate + NH4(+). It functions in the pathway pyrimidine metabolism; UMP biosynthesis via de novo pathway; (S)-dihydroorotate from bicarbonate: step 1/3. Its function is as follows. Small subunit of the glutamine-dependent carbamoyl phosphate synthetase (CPSase). CPSase catalyzes the formation of carbamoyl phosphate from the ammonia moiety of glutamine, carbonate, and phosphate donated by ATP, constituting the first step of the biosynthetic pathway leading to pyrimidine nucleotides. The small subunit (glutamine amidotransferase) binds and cleaves glutamine to supply the large subunit with the substrate ammonia. In Halalkalibacterium halodurans (strain ATCC BAA-125 / DSM 18197 / FERM 7344 / JCM 9153 / C-125) (Bacillus halodurans), this protein is Carbamoyl phosphate synthase pyrimidine-specific small chain.